Consider the following 1050-residue polypeptide: Atrial natriuretic peptide receptor 2 (1050 aa).

The first 19 residues, 1–19 (MDLGHSLFVVFTCFLMARC), serve as a signal peptide directing secretion. Topologically, residues 20–460 (RTEIGKNITV…FCNEDQLPVL (441 aa)) are extracellular. N-linked (GlcNAc...) asparagine glycosylation is found at asparagine 26 and asparagine 74. A disulfide bridge connects residues cysteine 84 and cysteine 110. 6 N-linked (GlcNAc...) asparagine glycosylation sites follow: asparagine 169, asparagine 203, asparagine 285, asparagine 352, asparagine 366, and asparagine 415. A disulfide bridge connects residues cysteine 236 and cysteine 339. Residues 461–481 (GIVAVGSGLALIIFGISSFLI) form a helical membrane-spanning segment. The Cytoplasmic segment spans residues 482–1050 (YRKLKLEKEL…LGEKTDVYVI (569 aa)). In terms of domain architecture, Protein kinase spans 517-790 (SRLTISQRGS…PDFSYIKIFV (274 aa)). In terms of domain architecture, Guanylate cyclase spans 865–995 (TIYFSDIVGF…DTVNTASRME (131 aa)).

This sequence belongs to the adenylyl cyclase class-4/guanylyl cyclase family. Post-translationally, phosphorylated. Phosphorylation of the protein kinase-like domain is required for full activation by CNP. In terms of processing, glycosylated. In terms of tissue distribution, high levels found in liver, atrium and gill. Moderate levels found in brain and ventricle, and low levels in esophageal sphincter, stomach, posterior intestine and kidney.

Its subcellular location is the cell membrane. It catalyses the reaction GTP = 3',5'-cyclic GMP + diphosphate. Receptor for the C-type natriuretic peptide NPPC/CNP hormone. Has guanylate cyclase activity upon binding of its ligand. May play a role in the regulation of skeletal growth. The polypeptide is Atrial natriuretic peptide receptor 2 (npr2) (Anguilla japonica (Japanese eel)).